Here is a 422-residue protein sequence, read N- to C-terminus: Tyrosine--tRNA ligase (422 aa).

Tyr35 contacts L-tyrosine. The short motif at 40-49 is the 'HIGH' region element; that stretch reads PTAPSLHLGN. L-tyrosine is bound by residues Tyr170 and Gln174. The 'KMSKS' region signature appears at 231–235; the sequence is KFGKT. Residue Lys234 participates in ATP binding. The region spanning 353 to 419 is the S4 RNA-binding domain; the sequence is APVVDLFAEV…GKKNLAAVEV (67 aa).

It belongs to the class-I aminoacyl-tRNA synthetase family. TyrS type 1 subfamily. Homodimer.

It is found in the cytoplasm. It carries out the reaction tRNA(Tyr) + L-tyrosine + ATP = L-tyrosyl-tRNA(Tyr) + AMP + diphosphate + H(+). Functionally, catalyzes the attachment of tyrosine to tRNA(Tyr) in a two-step reaction: tyrosine is first activated by ATP to form Tyr-AMP and then transferred to the acceptor end of tRNA(Tyr). The chain is Tyrosine--tRNA ligase from Streptomyces avermitilis (strain ATCC 31267 / DSM 46492 / JCM 5070 / NBRC 14893 / NCIMB 12804 / NRRL 8165 / MA-4680).